A 284-amino-acid polypeptide reads, in one-letter code: RNase adapter protein RapZ (284 aa).

Residue 8 to 15 (GRSGSGKS) participates in ATP binding. 56–59 (DVRN) provides a ligand contact to GTP. The segment at 266–284 (RSRGKNVQSRHRTLEKRRS) is RNA-binding.

Belongs to the RapZ-like family. RapZ subfamily. As to quaternary structure, homotrimer.

Modulates the synthesis of GlmS, by affecting the processing and stability of the regulatory small RNA GlmZ. When glucosamine-6-phosphate (GlcN6P) concentrations are high in the cell, RapZ binds GlmZ and targets it to cleavage by RNase E. Consequently, GlmZ is inactivated and unable to activate GlmS synthesis. Under low GlcN6P concentrations, RapZ is sequestered and inactivated by an other regulatory small RNA, GlmY, preventing GlmZ degradation and leading to synthesis of GlmS. This Erwinia tasmaniensis (strain DSM 17950 / CFBP 7177 / CIP 109463 / NCPPB 4357 / Et1/99) protein is RNase adapter protein RapZ.